The sequence spans 431 residues: Tol-Pal system protein TolB (431 aa).

The first 19 residues, 1-19 (MKRLLFFLICVFFSKTSYS), serve as a signal peptide directing secretion.

It belongs to the TolB family. As to quaternary structure, the Tol-Pal system is composed of five core proteins: the inner membrane proteins TolA, TolQ and TolR, the periplasmic protein TolB and the outer membrane protein Pal. They form a network linking the inner and outer membranes and the peptidoglycan layer.

The protein resides in the periplasm. Functionally, part of the Tol-Pal system, which plays a role in outer membrane invagination during cell division and is important for maintaining outer membrane integrity. TolB occupies a key intermediary position in the Tol-Pal system because it communicates directly with both membrane-embedded components, Pal in the outer membrane and TolA in the inner membrane. This Wigglesworthia glossinidia brevipalpis protein is Tol-Pal system protein TolB.